We begin with the raw amino-acid sequence, 667 residues long: Gamma-tubulin complex component 4 (667 aa).

A disordered region spans residues 424–446; the sequence is DHKADATQPREVPSRETSPREAP.

It belongs to the TUBGCP family. As to quaternary structure, component of the gamma-tubulin ring complex (gTuRC) consisting of TUBGCP2, TUBGCP3, TUBGCP4, TUBGCP5 and TUBGCP6 and gamma-tubulin TUBG1 or TUBG2. TUBGCP2, TUBGCP3, TUBGCP4, TUBGCP5 and TUBGCP6 assemble in a 5:5:2:1:1 stoichiometry; each is associated with a gamma-tubulin, thereby arranging 14 gamma-tubulins in a helical manner. Gamma-tubulin at the first position is blocked by TUBGCP3 at the last position, allowing 13 protafilaments to grow into a microtubule. The gTuRC (via TUBGCP3 and TUBGCP6) interacts with ACTB and MZT1; the interactions form a luminal bridge that stabilizes the initial structure during complex assembly. The gTuRC (via TUBGCP2) interacts with MZT2A/MZT2B and CDK5RAP2 (via CM1 motif); the interactions play a role in gTuRC activation. Interacts with NINL. Interacts with ATF5; the ATF5:PCNT:polyglutamylated tubulin (PGT) tripartite unites the mother centriole and the pericentriolar material (PCM) in the centrosome.

Its subcellular location is the cytoplasm. The protein resides in the cytoskeleton. The protein localises to the microtubule organizing center. It is found in the centrosome. Its function is as follows. Component of the gamma-tubulin ring complex (gTuRC) which mediates microtubule nucleation. The gTuRC regulates the minus-end nucleation of alpha-beta tubulin heterodimers that grow into microtubule protafilaments, a critical step in centrosome duplication and spindle formation. This is Gamma-tubulin complex component 4 (Tubgcp4) from Mus musculus (Mouse).